The sequence spans 717 residues: DNA ligase (717 aa).

NAD(+) is bound by residues 44-48 (DADYD), 93-94 (SL), and Glu127. Lys129 serves as the catalytic N6-AMP-lysine intermediate. Residues Arg150, Glu186, Lys302, and Lys326 each contribute to the NAD(+) site. Residues Cys431, Cys434, Cys455, and Cys461 each contribute to the Zn(2+) site. The BRCT domain maps to 639 to 717 (STDSPVAGKT…EDEWLALIGG (79 aa)).

This sequence belongs to the NAD-dependent DNA ligase family. LigA subfamily. Mg(2+) serves as cofactor. The cofactor is Mn(2+).

It carries out the reaction NAD(+) + (deoxyribonucleotide)n-3'-hydroxyl + 5'-phospho-(deoxyribonucleotide)m = (deoxyribonucleotide)n+m + AMP + beta-nicotinamide D-nucleotide.. DNA ligase that catalyzes the formation of phosphodiester linkages between 5'-phosphoryl and 3'-hydroxyl groups in double-stranded DNA using NAD as a coenzyme and as the energy source for the reaction. It is essential for DNA replication and repair of damaged DNA. This Sinorhizobium fredii (strain NBRC 101917 / NGR234) protein is DNA ligase.